A 227-amino-acid polypeptide reads, in one-letter code: tRNA (guanine-N(7)-)-methyltransferase (227 aa).

S-adenosyl-L-methionine-binding residues include Glu-58, Glu-83, Asp-110, and Asp-132. Residue Asp-132 is part of the active site. Substrate is bound by residues Lys-136, Asp-168, and 205-208 (TRFE).

Belongs to the class I-like SAM-binding methyltransferase superfamily. TrmB family.

It carries out the reaction guanosine(46) in tRNA + S-adenosyl-L-methionine = N(7)-methylguanosine(46) in tRNA + S-adenosyl-L-homocysteine. Its pathway is tRNA modification; N(7)-methylguanine-tRNA biosynthesis. Catalyzes the formation of N(7)-methylguanine at position 46 (m7G46) in tRNA. In Acidithiobacillus ferrooxidans (strain ATCC 23270 / DSM 14882 / CIP 104768 / NCIMB 8455) (Ferrobacillus ferrooxidans (strain ATCC 23270)), this protein is tRNA (guanine-N(7)-)-methyltransferase.